The following is a 65-amino-acid chain: Large ribosomal subunit protein bL31 (65 aa).

Zn(2+) is bound by residues Cys-16, Cys-18, Cys-36, and Cys-39.

This sequence belongs to the bacterial ribosomal protein bL31 family. Type A subfamily. Part of the 50S ribosomal subunit. The cofactor is Zn(2+).

In terms of biological role, binds the 23S rRNA. This chain is Large ribosomal subunit protein bL31, found in Alkaliphilus metalliredigens (strain QYMF).